Reading from the N-terminus, the 448-residue chain is Biotin carboxylase (448 aa).

In terms of domain architecture, Biotin carboxylation spans 1–445 (MLEKVVIANR…NIHYLEKKLG (445 aa)). ATP contacts are provided by residues K116, K159, 165 to 166 (GG), 201 to 204 (EKYL), H209, and H236. The ATP-grasp domain maps to 120–317 (IKAMKKAGVP…LVKEQLRIAA (198 aa)). K238 provides a ligand contact to hydrogencarbonate. ATP is bound by residues E276 and E288. Mg(2+)-binding residues include E276, E288, and N290. Residues E276, E288, and N290 each contribute to the Mn(2+) site. Hydrogencarbonate is bound by residues R292, V295, and R338. Residue R292 is part of the active site. R338 contacts biotin.

Acetyl-CoA carboxylase is a heterohexamer of biotin carboxyl carrier protein, biotin carboxylase and the two subunits of carboxyl transferase in a 2:2 complex. Mg(2+) is required as a cofactor. Requires Mn(2+) as cofactor.

It catalyses the reaction N(6)-biotinyl-L-lysyl-[protein] + hydrogencarbonate + ATP = N(6)-carboxybiotinyl-L-lysyl-[protein] + ADP + phosphate + H(+). It functions in the pathway lipid metabolism; malonyl-CoA biosynthesis; malonyl-CoA from acetyl-CoA: step 1/1. Functionally, this protein is a component of the acetyl coenzyme A carboxylase complex; first, biotin carboxylase catalyzes the carboxylation of the carrier protein and then the transcarboxylase transfers the carboxyl group to form malonyl-CoA. This Haemophilus influenzae (strain ATCC 51907 / DSM 11121 / KW20 / Rd) protein is Biotin carboxylase (accC).